The sequence spans 534 residues: Probable alpha-galactosidase A (534 aa).

Positions 1–25 (MRLITRWIPLANALASTMPVQVVAS) are cleaved as a signal peptide. Cysteine 47 and cysteine 79 are joined by a disulfide. Asparagine 50, asparagine 88, asparagine 94, and asparagine 124 each carry an N-linked (GlcNAc...) asparagine glycan. Cysteines 127 and 157 form a disulfide. The Nucleophile role is filled by aspartate 155. Residue asparagine 204 is glycosylated (N-linked (GlcNAc...) asparagine). The active-site Proton donor is the aspartate 213. Residues 413–534 (CSQVIPTGLI…GLPAGVHVAL (122 aa)) enclose the Ricin B-type lectin domain. A disulfide bond links cysteine 430 and cysteine 443. Asparagine 444 carries an N-linked (GlcNAc...) asparagine glycan. Residues cysteine 468 and cysteine 481 are joined by a disulfide bond.

This sequence belongs to the glycosyl hydrolase 27 family.

The protein localises to the secreted. The enzyme catalyses Hydrolysis of terminal, non-reducing alpha-D-galactose residues in alpha-D-galactosides, including galactose oligosaccharides, galactomannans and galactolipids.. Its function is as follows. Hydrolyzes a variety of simple alpha-D-galactoside as well as more complex molecules such as oligosaccharides and polysaccharides. The polypeptide is Probable alpha-galactosidase A (aglA) (Aspergillus flavus (strain ATCC 200026 / FGSC A1120 / IAM 13836 / NRRL 3357 / JCM 12722 / SRRC 167)).